We begin with the raw amino-acid sequence, 280 residues long: L-proline cis-4-hydroxylase (280 aa).

Residues H106, D108, and H154 each contribute to the Fe cation site. R164 serves as a coordination point for 2-oxoglutarate.

The protein belongs to the L-proline cis-4-/cis-3-hydroxylase family. The cofactor is Fe(2+).

The enzyme catalyses L-proline + 2-oxoglutarate + O2 = cis-4-hydroxy-L-proline + succinate + CO2. Inhibited by metal ions such as Co(2+), Zn(2+), Cu(2+) or Ni(2+). Is also inhibited by EDTA or diethylpyrocarbonate (DEPC) in vitro. Unlike the procollagen-proline cis-3- and trans-4-hydroxylases from mammals, does not necessarily require L-ascorbate for activity although it does increase the activity of the enzyme. Dioxygenase that catalyzes the 2-oxoglutarate-dependent selective hydroxylation of free L-proline to cis-4-hydroxy-L-proline (cis-4-Hyp). This is L-proline cis-4-hydroxylase from Rhizobium meliloti (strain 1021) (Ensifer meliloti).